The chain runs to 175 residues: Ribosome maturation factor RimM (175 aa).

The PRC barrel domain occupies 97–169 (EDKFYFHEII…TVRVITPEGL (73 aa)).

Belongs to the RimM family. As to quaternary structure, binds ribosomal protein uS19.

The protein resides in the cytoplasm. In terms of biological role, an accessory protein needed during the final step in the assembly of 30S ribosomal subunit, possibly for assembly of the head region. Essential for efficient processing of 16S rRNA. May be needed both before and after RbfA during the maturation of 16S rRNA. It has affinity for free ribosomal 30S subunits but not for 70S ribosomes. In Christiangramia forsetii (strain DSM 17595 / CGMCC 1.15422 / KT0803) (Gramella forsetii), this protein is Ribosome maturation factor RimM.